Here is a 331-residue protein sequence, read N- to C-terminus: Aspartate carbamoyltransferase catalytic subunit (331 aa).

Residues arginine 76 and threonine 77 each coordinate carbamoyl phosphate. Position 104 (lysine 104) interacts with L-aspartate. Positions 126, 154, and 157 each coordinate carbamoyl phosphate. Positions 187 and 246 each coordinate L-aspartate. Carbamoyl phosphate contacts are provided by glycine 287 and proline 288.

It belongs to the aspartate/ornithine carbamoyltransferase superfamily. ATCase family. As to quaternary structure, heterododecamer (2C3:3R2) of six catalytic PyrB chains organized as two trimers (C3), and six regulatory PyrI chains organized as three dimers (R2).

It catalyses the reaction carbamoyl phosphate + L-aspartate = N-carbamoyl-L-aspartate + phosphate + H(+). It functions in the pathway pyrimidine metabolism; UMP biosynthesis via de novo pathway; (S)-dihydroorotate from bicarbonate: step 2/3. Catalyzes the condensation of carbamoyl phosphate and aspartate to form carbamoyl aspartate and inorganic phosphate, the committed step in the de novo pyrimidine nucleotide biosynthesis pathway. The polypeptide is Aspartate carbamoyltransferase catalytic subunit (Dehalococcoides mccartyi (strain ATCC BAA-2100 / JCM 16839 / KCTC 5957 / BAV1)).